Reading from the N-terminus, the 444-residue chain is Argininosuccinate synthase (444 aa).

ATP contacts are provided by residues 18-26 (AFSGGLDTS) and Ala-44. Tyr-100 is an L-citrulline binding site. ATP is bound by residues Gly-130 and Thr-132. L-aspartate-binding residues include Thr-132, Asn-136, and Asp-137. Asn-136 serves as a coordination point for L-citrulline. An ATP-binding site is contributed by Asp-137. Residues Arg-140 and Ser-193 each coordinate L-citrulline. Position 195 (Asp-195) interacts with ATP. L-citrulline is bound by residues Thr-202, Glu-204, and Glu-281.

It belongs to the argininosuccinate synthase family. Type 2 subfamily. In terms of assembly, homotetramer.

Its subcellular location is the cytoplasm. It catalyses the reaction L-citrulline + L-aspartate + ATP = 2-(N(omega)-L-arginino)succinate + AMP + diphosphate + H(+). It participates in amino-acid biosynthesis; L-arginine biosynthesis; L-arginine from L-ornithine and carbamoyl phosphate: step 2/3. This chain is Argininosuccinate synthase, found in Histophilus somni (strain 129Pt) (Haemophilus somnus).